A 265-amino-acid chain; its full sequence is Upstream stimulatory factor (265 aa).

Basic and acidic residues predominate over residues 1 to 18 (MDVQDHTLDQGPQDKDKD). 2 disordered regions span residues 1–21 (MDVQ…DLEE) and 119–149 (ASAA…AAGG). The segment covering 134–144 (GEQQPGITQPS) has biased composition (polar residues). A bHLH domain is found at 190–245 (RRRATHNEVERRRRDKINNWIVKLSKIIPDCNIDHSKQGQSKGGILTKTCDYIHDL).

Efficient DNA binding requires dimerization with another bHLH protein. Binds DNA as a homodimer or a heterodimer. As to expression, enriched in ectodermal tissue.

The protein localises to the nucleus. Its function is as follows. May act as a transcription factor which recognizes the CACGTG motif on SPEC gene promoters. This Strongylocentrotus purpuratus (Purple sea urchin) protein is Upstream stimulatory factor.